The sequence spans 296 residues: 4-hydroxybenzoate octaprenyltransferase (296 aa).

8 consecutive transmembrane segments (helical) span residues 22-42 (PIGILLLLWPTLWALWLSALG), 46-66 (WIVVWIFILGTVLMRSAGCVI), 99-121 (LFAGLSLLSFLLVVFLGNTLVIW), 139-159 (FFAIPQAYLGVAFGFGIPMAY), 163-183 (LGEVPAEAWWLLLANVFWAVA), 211-231 (FDVAAVMLCYGVTLAIIGGIG), 238-258 (PAFYAGLAVATCIMGVHYTWI), and 270-290 (FLHNNWVGLSIFVGIVVDFLV).

The protein belongs to the UbiA prenyltransferase family. Mg(2+) is required as a cofactor.

The protein localises to the cell inner membrane. The enzyme catalyses all-trans-octaprenyl diphosphate + 4-hydroxybenzoate = 4-hydroxy-3-(all-trans-octaprenyl)benzoate + diphosphate. The protein operates within cofactor biosynthesis; ubiquinone biosynthesis. Its function is as follows. Catalyzes the prenylation of para-hydroxybenzoate (PHB) with an all-trans polyprenyl group. Mediates the second step in the final reaction sequence of ubiquinone-8 (UQ-8) biosynthesis, which is the condensation of the polyisoprenoid side chain with PHB, generating the first membrane-bound Q intermediate 3-octaprenyl-4-hydroxybenzoate. The chain is 4-hydroxybenzoate octaprenyltransferase from Dechloromonas aromatica (strain RCB).